A 264-amino-acid polypeptide reads, in one-letter code: Transcription factor bHLH52 (264 aa).

The bHLH domain maps to 134-183 (RELSAQSIAARKRRRRITEKTQELGKLIPGSQKHNTAEMFNAAAKYVKFL).

As to quaternary structure, homodimer. In terms of tissue distribution, expressed constitutively in roots, leaves, stems, and flowers.

The protein localises to the nucleus. The polypeptide is Transcription factor bHLH52 (BHLH52) (Arabidopsis thaliana (Mouse-ear cress)).